The primary structure comprises 474 residues: Glycogen synthase (474 aa).

K15 contributes to the ADP-alpha-D-glucose binding site.

Belongs to the glycosyltransferase 1 family. Bacterial/plant glycogen synthase subfamily.

It carries out the reaction [(1-&gt;4)-alpha-D-glucosyl](n) + ADP-alpha-D-glucose = [(1-&gt;4)-alpha-D-glucosyl](n+1) + ADP + H(+). Its pathway is glycan biosynthesis; glycogen biosynthesis. In terms of biological role, synthesizes alpha-1,4-glucan chains using ADP-glucose. The sequence is that of Glycogen synthase from Chlamydia trachomatis serovar A (strain ATCC VR-571B / DSM 19440 / HAR-13).